Consider the following 391-residue polypeptide: Succinyl-diaminopimelate desuccinylase (391 aa).

His-74 lines the Zn(2+) pocket. Asp-76 is an active-site residue. Asp-107 serves as a coordination point for Zn(2+). Residue Glu-141 is the Proton acceptor of the active site. Positions 142, 170, and 360 each coordinate Zn(2+).

Belongs to the peptidase M20A family. DapE subfamily. In terms of assembly, homodimer. Zn(2+) serves as cofactor. The cofactor is Co(2+).

The catalysed reaction is N-succinyl-(2S,6S)-2,6-diaminopimelate + H2O = (2S,6S)-2,6-diaminopimelate + succinate. The protein operates within amino-acid biosynthesis; L-lysine biosynthesis via DAP pathway; LL-2,6-diaminopimelate from (S)-tetrahydrodipicolinate (succinylase route): step 3/3. Its function is as follows. Catalyzes the hydrolysis of N-succinyl-L,L-diaminopimelic acid (SDAP), forming succinate and LL-2,6-diaminopimelate (DAP), an intermediate involved in the bacterial biosynthesis of lysine and meso-diaminopimelic acid, an essential component of bacterial cell walls. This Variovorax paradoxus (strain S110) protein is Succinyl-diaminopimelate desuccinylase.